The sequence spans 458 residues: MKPPTRSQNRSDSQAASSQKDQKSNVENQTSLAPPPRPGAPTASDTPDYFNSMHNPFSLEPNPFEQSFGGNPADTPGKSLLPSVAALTSPALPGTSSASGYNWNNSLRSGPLSPAMLPGPTGPNDYFDSIGRGFPTPNESSLRTGLTPGGGGSMFPAPSPNSQALLQQLQNGGATPSTIDFHRTALAAKKNNSNAPTSNPNEQEQAAANMDVKPARPADFTQHDAADAANGLFMLAKGGQANNAPMNHAPMSNDTRAAARRVSQNTNGTSAEDASDHEPAKPAKGKGKKNTAKAPAANNRRKAEDAPKGSNKRSKSSMEMPSDMDDEDDEDDDMKQFPMDTKKMTDEEKRRNFLERNRVAALKCRQRKKQWLANLQNKVELFTSENDALTATVTQLREEIVNLKTLLLAHKDCPVSQAQGLGPLMMNGMSAGYDHHGYNMPPNMGMQPGGIPTQGMRR.

The region spanning 347–410 is the bZIP domain; the sequence is EEKRRNFLER…VNLKTLLLAH (64 aa). Residues 349–378 are basic motif; the sequence is KRRNFLERNRVAALKCRQRKKQWLANLQNK. A leucine-zipper region spans residues 389 to 403; it reads LTATVTQLREEIVNL.

The protein belongs to the bZIP family.

Its subcellular location is the nucleus. Functionally, transcription factor that positively regulates vegetative growth, reproduction, and osmotic stress response. In Penicillium expansum (Blue mold rot fungus), this protein is Transcription factor Atf1.